The chain runs to 967 residues: Nonsense-mediated mRNA decay factor SMG8 (967 aa).

Positions 627–702 (LNEGEDADAD…SCPESQSVAS (76 aa)) are disordered. Positions 628-639 (NEGEDADADADS) are enriched in acidic residues. Residues 643-666 (RSQICSSGQSSRSRSNSSSSDTSS) are compositionally biased toward low complexity. A compositionally biased stretch (polar residues) spans 686-702 (ATEALSESCPESQSVAS).

Belongs to the SMG8 family.

Involved in nonsense-mediated decay (NMD) of mRNAs containing premature stop codons. Probable component of kinase complex containing nonC and recruited to stalled ribosomes. This chain is Nonsense-mediated mRNA decay factor SMG8, found in Drosophila mojavensis (Fruit fly).